The following is a 633-amino-acid chain: Extracellular metalloproteinase 3 (633 aa).

An N-terminal signal peptide occupies residues 1–18 (MHGLLLAGLLALPMNVLA). A propeptide spanning residues 19–246 (HPAEQQTSSV…VHNVVDYVAS (228 aa)) is cleaved from the precursor. N-linked (GlcNAc...) asparagine glycosylation occurs at N410. Residue H429 participates in Zn(2+) binding. E430 is an active-site residue. H433 contributes to the Zn(2+) binding site. N480 carries N-linked (GlcNAc...) asparagine glycosylation.

Belongs to the peptidase M36 family. Zn(2+) serves as cofactor.

It localises to the secreted. Secreted metalloproteinase probably acting as a virulence factor. The sequence is that of Extracellular metalloproteinase 3 (MEP3) from Arthroderma otae (Microsporum canis).